We begin with the raw amino-acid sequence, 347 residues long: MNILGIETSCDETSASVVQNGRVTSNIISSQLIHTSYGGVVPELASREHERLIVSVVDAAVNEANIQKNDLDVIAATAGPGLIGAVMVGLCFAQGLAYVLDKPLVPVNHIEAHIFSGFIHEGPDHDPPKEAFISLTVSGGHTMLSVVQQDLTYQVIGRTIDDAAGEAFDKTGKMLGLDYPAGPVIDRLAADGDPGFHEFPRALTSQSRTSKSYRNNFDFSFSGLKTSVLHYIGKQDPSYIERHLQDIAASVQEAITSVLVEKTVAAAKKYRINAISVAGGVSANSGLRQKMAVACEANGLRLYIPKPVYSTDNAAMIATFAHLKLSRGTTTPNTYDIAPFASFETQG.

His-109 and His-113 together coordinate Fe cation. Substrate-binding positions include 136–140 (TVSGG), Asp-169, Gly-182, Asp-186, and Asn-284. Asp-312 provides a ligand contact to Fe cation.

Belongs to the KAE1 / TsaD family. Requires Fe(2+) as cofactor.

Its subcellular location is the cytoplasm. It catalyses the reaction L-threonylcarbamoyladenylate + adenosine(37) in tRNA = N(6)-L-threonylcarbamoyladenosine(37) in tRNA + AMP + H(+). In terms of biological role, required for the formation of a threonylcarbamoyl group on adenosine at position 37 (t(6)A37) in tRNAs that read codons beginning with adenine. Is involved in the transfer of the threonylcarbamoyl moiety of threonylcarbamoyl-AMP (TC-AMP) to the N6 group of A37, together with TsaE and TsaB. TsaD likely plays a direct catalytic role in this reaction. This Chlorobium phaeobacteroides (strain BS1) protein is tRNA N6-adenosine threonylcarbamoyltransferase.